A 192-amino-acid chain; its full sequence is Peptidyl-tRNA hydrolase (192 aa).

Residue Tyr-14 coordinates tRNA. Residue His-19 is the Proton acceptor of the active site. Residues Tyr-64, Asn-66, and Asn-112 each coordinate tRNA.

Belongs to the PTH family. As to quaternary structure, monomer.

Its subcellular location is the cytoplasm. It catalyses the reaction an N-acyl-L-alpha-aminoacyl-tRNA + H2O = an N-acyl-L-amino acid + a tRNA + H(+). Hydrolyzes ribosome-free peptidyl-tRNAs (with 1 or more amino acids incorporated), which drop off the ribosome during protein synthesis, or as a result of ribosome stalling. Its function is as follows. Catalyzes the release of premature peptidyl moieties from peptidyl-tRNA molecules trapped in stalled 50S ribosomal subunits, and thus maintains levels of free tRNAs and 50S ribosomes. The protein is Peptidyl-tRNA hydrolase of Anaeromyxobacter dehalogenans (strain 2CP-C).